The following is a 185-amino-acid chain: Ribosome-recycling factor (185 aa).

Belongs to the RRF family.

It is found in the cytoplasm. Its function is as follows. Responsible for the release of ribosomes from messenger RNA at the termination of protein biosynthesis. May increase the efficiency of translation by recycling ribosomes from one round of translation to another. The sequence is that of Ribosome-recycling factor from Dehalococcoides mccartyi (strain CBDB1).